Reading from the N-terminus, the 102-residue chain is Small ribosomal subunit protein uS10 (102 aa).

It belongs to the universal ribosomal protein uS10 family. Part of the 30S ribosomal subunit.

Involved in the binding of tRNA to the ribosomes. The protein is Small ribosomal subunit protein uS10 of Streptococcus equi subsp. zooepidemicus (strain MGCS10565).